Reading from the N-terminus, the 71-residue chain is Small integral membrane protein 31 (71 aa).

A helical transmembrane segment spans residues 8–28 (LEVAFILLAFFIFSLFTLASI). Residues 48 to 57 (RKRKEFKGKK) are compositionally biased toward basic residues. The disordered stretch occupies residues 48–71 (RKRKEFKGKKNCSDEEHKIETMQP). Asn58 carries an N-linked (GlcNAc...) asparagine glycan. Basic and acidic residues predominate over residues 58-71 (NCSDEEHKIETMQP).

The protein resides in the membrane. The chain is Small integral membrane protein 31 from Mus musculus (Mouse).